Consider the following 383-residue polypeptide: Lipid-A-disaccharide synthase (383 aa).

It belongs to the LpxB family.

It carries out the reaction a lipid X + a UDP-2-N,3-O-bis[(3R)-3-hydroxyacyl]-alpha-D-glucosamine = a lipid A disaccharide + UDP + H(+). Its pathway is bacterial outer membrane biogenesis; LPS lipid A biosynthesis. Functionally, condensation of UDP-2,3-diacylglucosamine and 2,3-diacylglucosamine-1-phosphate to form lipid A disaccharide, a precursor of lipid A, a phosphorylated glycolipid that anchors the lipopolysaccharide to the outer membrane of the cell. In Myxococcus xanthus (strain DK1622), this protein is Lipid-A-disaccharide synthase.